The following is a 1229-amino-acid chain: Putative cell division cycle ATPase (1229 aa).

Residues 252 to 267 show a composition bias toward low complexity; the sequence is GKKNNNGNVKKGIKNV. Residues 252–315 form a disordered region; that stretch reads GKKNNNGNVK…GGKNNSYYNE (64 aa). Residues 268-281 show a composition bias toward basic and acidic residues; that stretch reads PMDEKSYSPNDHDN. The span at 282-314 shows a compositional bias: low complexity; the sequence is NSNNSNNNNNNDNNNSNNNNNNNNGGKNNSYYN. ATP is bound at residue 568–575; it reads GIPGTGKT. 2 disordered regions span residues 814–837 and 860–892; these read TLLQ…DALD and FSND…KNER. 2 stretches are compositionally biased toward basic and acidic residues: residues 819-837 and 882-892; these read DKNE…DALD and NPNDKLDKNER. 975–982 lines the ATP pocket; the sequence is GPPGCGKT.

The protein belongs to the AAA ATPase family.

The chain is Putative cell division cycle ATPase from Plasmodium falciparum (isolate 3D7).